We begin with the raw amino-acid sequence, 308 residues long: Ribosomal RNA large subunit methyltransferase F (308 aa).

This sequence belongs to the methyltransferase superfamily. METTL16/RlmF family.

Its subcellular location is the cytoplasm. The catalysed reaction is adenosine(1618) in 23S rRNA + S-adenosyl-L-methionine = N(6)-methyladenosine(1618) in 23S rRNA + S-adenosyl-L-homocysteine + H(+). Functionally, specifically methylates the adenine in position 1618 of 23S rRNA. This is Ribosomal RNA large subunit methyltransferase F from Salmonella dublin (strain CT_02021853).